A 66-amino-acid polypeptide reads, in one-letter code: Large ribosomal subunit protein bL35 (66 aa).

Belongs to the bacterial ribosomal protein bL35 family.

The polypeptide is Large ribosomal subunit protein bL35 (Neorickettsia sennetsu (strain ATCC VR-367 / Miyayama) (Ehrlichia sennetsu)).